A 392-amino-acid chain; its full sequence is ATP phosphoribosyltransferase regulatory subunit (392 aa).

This sequence belongs to the class-II aminoacyl-tRNA synthetase family. HisZ subfamily. In terms of assembly, heteromultimer composed of HisG and HisZ subunits.

Its subcellular location is the cytoplasm. The protein operates within amino-acid biosynthesis; L-histidine biosynthesis; L-histidine from 5-phospho-alpha-D-ribose 1-diphosphate: step 1/9. Functionally, required for the first step of histidine biosynthesis. May allow the feedback regulation of ATP phosphoribosyltransferase activity by histidine. The sequence is that of ATP phosphoribosyltransferase regulatory subunit from Prochlorococcus marinus (strain MIT 9313).